Consider the following 304-residue polypeptide: Bifunctional protein FolD (304 aa).

NADP(+) is bound by residues 167-169 (GRS), serine 192, and isoleucine 233.

It belongs to the tetrahydrofolate dehydrogenase/cyclohydrolase family. In terms of assembly, homodimer.

The enzyme catalyses (6R)-5,10-methylene-5,6,7,8-tetrahydrofolate + NADP(+) = (6R)-5,10-methenyltetrahydrofolate + NADPH. It catalyses the reaction (6R)-5,10-methenyltetrahydrofolate + H2O = (6R)-10-formyltetrahydrofolate + H(+). The protein operates within one-carbon metabolism; tetrahydrofolate interconversion. Functionally, catalyzes the oxidation of 5,10-methylenetetrahydrofolate to 5,10-methenyltetrahydrofolate and then the hydrolysis of 5,10-methenyltetrahydrofolate to 10-formyltetrahydrofolate. The polypeptide is Bifunctional protein FolD (Rhodospirillum centenum (strain ATCC 51521 / SW)).